A 304-amino-acid polypeptide reads, in one-letter code: Oxygen-dependent coproporphyrinogen-III oxidase (304 aa).

Ser-93 contributes to the substrate binding site. The a divalent metal cation site is built by His-97 and His-107. His-107 (proton donor) is an active-site residue. 109 to 111 (NVR) provides a ligand contact to substrate. A divalent metal cation-binding residues include His-146 and His-176. Positions 241-276 (YVEFNLVYDRGTLFGLQSGGRTESILMSLPPQVRWA) are important for dimerization. 259–261 (GGR) is a binding site for substrate.

It belongs to the aerobic coproporphyrinogen-III oxidase family. Homodimer. A divalent metal cation serves as cofactor.

Its subcellular location is the cytoplasm. The catalysed reaction is coproporphyrinogen III + O2 + 2 H(+) = protoporphyrinogen IX + 2 CO2 + 2 H2O. It participates in porphyrin-containing compound metabolism; protoporphyrin-IX biosynthesis; protoporphyrinogen-IX from coproporphyrinogen-III (O2 route): step 1/1. Functionally, involved in the heme biosynthesis. Catalyzes the aerobic oxidative decarboxylation of propionate groups of rings A and B of coproporphyrinogen-III to yield the vinyl groups in protoporphyrinogen-IX. The sequence is that of Oxygen-dependent coproporphyrinogen-III oxidase from Pseudomonas fluorescens (strain Pf0-1).